The following is a 522-amino-acid chain: Flavin-dependent halogenase armH1 (522 aa).

Gly-16, Ala-19, and Glu-49 together coordinate FAD. Positions 328 and 329 each coordinate chloride. Ile-330 is a binding site for FAD.

Belongs to the flavin-dependent halogenase family.

The catalysed reaction is melleolide F + FADH2 + chloride + O2 = 6'-chloromelleolide F + FAD + 2 H2O + H(+). In terms of biological role, flavin-dependent halogenase involved in the biosynthesis of melleolides, a range of antifungal and phytotoxic polyketide derivatives composed of an orsellinic acid (OA) moiety esterified to various sesquiterpene alcohols. The halogenase catalyzes the transfer of a single chlorine atom to the melleolide backbone, resulting in a 6'-chloromelleolide product. The enzyme acts on free substrate and does not depend on carrier-protein-dependent acceptor molecules. In Armillaria mellea (Honey mushroom), this protein is Flavin-dependent halogenase armH1.